The primary structure comprises 329 residues: Malate dehydrogenase (329 aa).

11–17 serves as a coordination point for NAD(+); it reads GAAGQIA. Residues arginine 92 and arginine 98 each contribute to the substrate site. NAD(+) contacts are provided by residues asparagine 105, glutamine 112, and 129–131; that span reads VGN. Substrate is bound by residues asparagine 131 and arginine 162. The Proton acceptor role is filled by histidine 187.

This sequence belongs to the LDH/MDH superfamily. MDH type 2 family.

The enzyme catalyses (S)-malate + NAD(+) = oxaloacetate + NADH + H(+). Its function is as follows. Catalyzes the reversible oxidation of malate to oxaloacetate. The chain is Malate dehydrogenase from Akkermansia muciniphila (strain ATCC BAA-835 / DSM 22959 / JCM 33894 / BCRC 81048 / CCUG 64013 / CIP 107961 / Muc).